Consider the following 740-residue polypeptide: Putative Pol polyprotein from transposon element Bs1 (740 aa).

One copy of the PPR repeat lies at 469–503 (TAVAHNLLVQALFMDGRASDAYVVLEEMQNNGPFP).

Bs1 is probably an active plant retrotransposon. The polypeptide is Putative Pol polyprotein from transposon element Bs1 (Zea mays (Maize)).